Here is a 232-residue protein sequence, read N- to C-terminus: MSEKDNQGHRERIREKFFNNGIDGFAEYEILELLLTYCIPRKDTKPIAKELLNKFKSLDNVFKASFDKLSTIDGLGKNSITFLKLLGELPSIIYKDELKNKKLIDKETLKISNKDILLKYLRNKIGYEEIEKFYVIYLSSSNEVIEFEENSVGTLDRSSVYPREIYKKVINLNAKSIILAHNHPSDNITPSKSDIELTNEIAKGLKNFGALLIEHIIITKNSYFSFLEEGLI.

The MPN domain maps to 110–232 (KISNKDILLK…YFSFLEEGLI (123 aa)). Zn(2+) contacts are provided by His181, His183, and Asp194. Residues 181 to 194 (HNHPSDNITPSKSD) carry the JAMM motif motif.

This sequence belongs to the UPF0758 family.

The protein is UPF0758 protein FN0909 of Fusobacterium nucleatum subsp. nucleatum (strain ATCC 25586 / DSM 15643 / BCRC 10681 / CIP 101130 / JCM 8532 / KCTC 2640 / LMG 13131 / VPI 4355).